A 261-amino-acid chain; its full sequence is Synaptophysin-like protein 1 (261 aa).

The Cytoplasmic segment spans residues 1 to 33 (MASKANMVRQRFSRLSQRMSAFQINLNPLKEPL). The region spanning 28–239 (PLKEPLGFIK…NAWFVYKETS (212 aa)) is the MARVEL domain. Residues 34–54 (GFIKILEWFASIFAFATCGGF) form a helical membrane-spanning segment. The Vesicular segment spans residues 55 to 117 (KGKTEIQVNC…LIGDYSSSAQ (63 aa)). N-linked (GlcNAc...) asparagine glycosylation is found at asparagine 72 and asparagine 95. The chain crosses the membrane as a helical span at residues 118–138 (FYVTFAVFVFLYCIAALLLYV). The Cytoplasmic segment spans residues 139–151 (GYTNLYRDSRKLP). A helical transmembrane segment spans residues 152 to 172 (MIDFIVTLVATFLWLVSSSAW). Residues 173 to 214 (AKALTDIKVATGHRIVEELEICNPESGVSCYFVSVTSMGSLN) lie on the Vesicular side of the membrane. Asparagine 214 is a glycosylation site (N-linked (GlcNAc...) asparagine). Residues 215–235 (VSVIFGFLNMILWGGNAWFVY) traverse the membrane as a helical segment. The Cytoplasmic portion of the chain corresponds to 236 to 261 (KETSLHSPSNTSASHSQGGGPPTSGM). A compositionally biased stretch (polar residues) spans 241-251 (HSPSNTSASHS). A disordered region spans residues 241–261 (HSPSNTSASHSQGGGPPTSGM). The span at 252–261 (QGGGPPTSGM) shows a compositional bias: gly residues.

It belongs to the synaptophysin/synaptobrevin family. As to expression, ubiquitously expressed.

It is found in the cytoplasmic vesicle membrane. Its subcellular location is the melanosome. In Mus musculus (Mouse), this protein is Synaptophysin-like protein 1 (Sypl1).